Reading from the N-terminus, the 140-residue chain is MGLMTRIADKTGALGSVVSAMGCAACFPALASFGAAIGLGFLSQYEGLFISRLLPLFAALAFLANALGWFSHRQWLRSLLGMIGPAIVFAATVWLLGNWWTANLMYVGLALMIGVSIWDFVSPAHRRCGPDGCELPAKRL.

The Cytoplasmic segment spans residues glycine 2–lysine 10. Residues threonine 11–alanine 31 traverse the membrane as a helical segment. Positions 22 and 25 each coordinate Hg(2+). Over serine 32 to glutamate 46 the chain is Periplasmic. Residues glycine 47–leucine 67 form a helical membrane-spanning segment. Topologically, residues glycine 68–serine 78 are cytoplasmic. A helical membrane pass occupies residues leucine 79 to tryptophan 99. Residues tryptophan 100 to tyrosine 106 lie on the Periplasmic side of the membrane. The helical transmembrane segment at valine 107–arginine 127 threads the bilayer. The Cytoplasmic segment spans residues cysteine 128–leucine 140.

It is found in the cell inner membrane. Its activity is regulated as follows. Uptake of Hg(2+) is decreased by iodoacetamide and iodoacetate, and is completely inhibited by the thiol-modifying reagent N-ethylmaleimide (NEM). Its function is as follows. Involved in mercuric ion uptake and binding. MerC-mediated Hg(2+) uptake does not require MerP. The polypeptide is Mercuric transport protein MerC (Shigella flexneri).